The primary structure comprises 416 residues: Tyrosine aminotransferase (416 aa).

An N6-(pyridoxal phosphate)lysine modification is found at Lys-253.

The protein belongs to the class-I pyridoxal-phosphate-dependent aminotransferase family. In terms of assembly, homodimer. Requires pyridoxal 5'-phosphate as cofactor. Post-translationally, the N-terminus is blocked.

It is found in the cytoplasm. The protein localises to the mitochondrion. The enzyme catalyses L-tyrosine + 2-oxoglutarate = 3-(4-hydroxyphenyl)pyruvate + L-glutamate. It functions in the pathway amino-acid degradation; L-phenylalanine degradation; acetoacetate and fumarate from L-phenylalanine: step 2/6. Its function is as follows. Transaminase involved in tyrosine breakdown. Converts tyrosine to p-hydroxyphenylpyruvate. This is Tyrosine aminotransferase from Trypanosoma cruzi.